Consider the following 190-residue polypeptide: MPRLILASTSVYRRALLGRLQLDFDTVRPEVDEQARPGESPSALASRLAVEKAATVAARFPDAWVIGSDQVADLDGQALGKPGTHERARMQLTAMSGQTVRFHTAVSLVGPERQLHALDLTEVQLRALTVVEIERYLDAEPALDCAGSFKCEGLGISLFDAIRSEDPTALVGLPMIALARLLRQAGFQIP.

Asp69 functions as the Proton acceptor in the catalytic mechanism.

This sequence belongs to the Maf family. YceF subfamily. Requires a divalent metal cation as cofactor.

The protein localises to the cytoplasm. The catalysed reaction is N(7)-methyl-GTP + H2O = N(7)-methyl-GMP + diphosphate + H(+). In terms of biological role, nucleoside triphosphate pyrophosphatase that hydrolyzes 7-methyl-GTP (m(7)GTP). May have a dual role in cell division arrest and in preventing the incorporation of modified nucleotides into cellular nucleic acids. This is 7-methyl-GTP pyrophosphatase from Xanthomonas axonopodis pv. citri (strain 306).